The chain runs to 98 residues: Cell cycle protein GpsB (98 aa).

A coiled-coil region spans residues 34–71 (LDLIIKDYEAFQQEIDELRQENARLKRQVEELQKRPAM).

Belongs to the GpsB family. In terms of assembly, forms polymers through the coiled coil domains. Interacts with PBP1, MreC and EzrA.

It is found in the cytoplasm. Its function is as follows. Divisome component that associates with the complex late in its assembly, after the Z-ring is formed, and is dependent on DivIC and PBP2B for its recruitment to the divisome. Together with EzrA, is a key component of the system that regulates PBP1 localization during cell cycle progression. Its main role could be the removal of PBP1 from the cell pole after pole maturation is completed. Also contributes to the recruitment of PBP1 to the division complex. Not essential for septum formation. The chain is Cell cycle protein GpsB from Geobacillus kaustophilus (strain HTA426).